We begin with the raw amino-acid sequence, 750 residues long: MPLSYQRFRRLLLLDDEAGPLEEELPRLADEDLNRRVAEDLNLGNLNVSIPWTHKVGNFTGLYSSTVPVFNPHWKPPSFPNIHLHQDIIKKCEQFVGPLTVNEKRRLKLIMPARFYPNFTKYLPLDKGIKPYYPEHLVNHYFQTRHYLHTLWKAGVLYKRVSTHSASFCGSPYSWEQELQHGAESFHQQSSGILSRPPVGSSLQSKHQQSRLGLQSQQGHLARRQQGRSWSIRARVHPTARRPFGVEPSGSGHNANLASKSASCLYQSPVRTAAYPAVSTSENHSSSGHALELHNLPPNSARSQSERPVFPCWWLQFRDSKPCSDYYLSHIVNLLEDWGPCAEHGEHHIRIPRTPARVTGGVFLVDKNPHNTAESRLVVDFSQFSRGNYRVSWPKFAVPNLQSLTNLLSSNLSWLSLDVSAAFYHLPLHPAAMPHLLVGSSGLSRYVARLSSNSRIINHQHGILQNLHDSCSRNLYVSLLLLYKTFGWKLHLYSHPIILGFRKIPMGVGLSPFLLAQFTSAICSVVRRAFPHCLAFSYMDDVVLGAKSVQHLESLFTAVTNFLLSLGIHLNPNKTKRWGYSLNFMGYVIGCWGSLPQDHIIHKIKECFRKLPVHRPIDWKVCQRIVGLLGFAAPFTQCGYPALMPLYACIQSKQAFTFSPTYKAFLCKQYLNLYPVAEQRPGLCQVFADATPTGWGLVMGHQRMRGTFLAPLPIHTAELLAACFARSRSGANILGTDNSVVLSRKYTSFP.

The terminal protein domain (TP) stretch occupies residues 1 to 177 (MPLSYQRFRR…FCGSPYSWEQ (177 aa)). Residues 178–335 (ELQHGAESFH…YYLSHIVNLL (158 aa)) are spacer. Disordered regions lie at residues 186–229 (FHQQ…QGRS) and 279–302 (STSE…NSAR). Positions 210 to 220 (SRLGLQSQQGH) are enriched in low complexity. The segment covering 279-288 (STSENHSSSG) has biased composition (polar residues). Residues 336–679 (EDWGPCAEHG…YLNLYPVAEQ (344 aa)) are polymerase/reverse transcriptase domain (RT). The region spanning 346 to 589 (EHHIRIPRTP…YSLNFMGYVI (244 aa)) is the Reverse transcriptase domain. Residues Asp-418, Asp-540, and Asp-541 each coordinate Mg(2+). The rnaseH domain (RH) stretch occupies residues 680–750 (RPGLCQVFAD…VLSRKYTSFP (71 aa)).

This sequence belongs to the hepadnaviridae P protein family.

It catalyses the reaction DNA(n) + a 2'-deoxyribonucleoside 5'-triphosphate = DNA(n+1) + diphosphate. The catalysed reaction is Endonucleolytic cleavage to 5'-phosphomonoester.. Activated by host HSP70 and HSP40 in vitro to be able to bind the epsilon loop of the pgRNA. Because deletion of the RNase H region renders the protein partly chaperone-independent, the chaperones may be needed indirectly to relieve occlusion of the RNA-binding site by this domain. Inhibited by several reverse-transcriptase inhibitors: Lamivudine, Adefovir and Entecavir. Multifunctional enzyme that converts the viral RNA genome into dsDNA in viral cytoplasmic capsids. This enzyme displays a DNA polymerase activity that can copy either DNA or RNA templates, and a ribonuclease H (RNase H) activity that cleaves the RNA strand of RNA-DNA heteroduplexes in a partially processive 3'- to 5'-endonucleasic mode. Neo-synthesized pregenomic RNA (pgRNA) are encapsidated together with the P protein, and reverse-transcribed inside the nucleocapsid. Initiation of reverse-transcription occurs first by binding the epsilon loop on the pgRNA genome, and is initiated by protein priming, thereby the 5'-end of (-)DNA is covalently linked to P protein. Partial (+)DNA is synthesized from the (-)DNA template and generates the relaxed circular DNA (RC-DNA) genome. After budding and infection, the RC-DNA migrates in the nucleus, and is converted into a plasmid-like covalently closed circular DNA (cccDNA). The activity of P protein does not seem to be necessary for cccDNA generation, and is presumably released from (+)DNA by host nuclear DNA repair machinery. This Hepatitis B virus genotype D subtype adw (isolate United Kingdom/adyw/1979) (HBV-D) protein is Protein P (P).